The following is a 275-amino-acid chain: Pantothenate synthetase (275 aa).

26–33 contributes to the ATP binding site; sequence MGNLHDGH. Histidine 33 functions as the Proton donor in the catalytic mechanism. (R)-pantoate is bound at residue glutamine 57. Glutamine 57 contacts beta-alanine. 144–147 provides a ligand contact to ATP; that stretch reads GKKD. Glutamine 150 lines the (R)-pantoate pocket. ATP-binding positions include valine 173 and 181 to 184; that span reads LSSR.

This sequence belongs to the pantothenate synthetase family. Homodimer.

The protein localises to the cytoplasm. It carries out the reaction (R)-pantoate + beta-alanine + ATP = (R)-pantothenate + AMP + diphosphate + H(+). It functions in the pathway cofactor biosynthesis; (R)-pantothenate biosynthesis; (R)-pantothenate from (R)-pantoate and beta-alanine: step 1/1. Its function is as follows. Catalyzes the condensation of pantoate with beta-alanine in an ATP-dependent reaction via a pantoyl-adenylate intermediate. This is Pantothenate synthetase from Azoarcus sp. (strain BH72).